Here is a 353-residue protein sequence, read N- to C-terminus: Ribosomal RNA large subunit methyltransferase M (353 aa).

S-adenosyl-L-methionine is bound by residues Ser179, 212-215 (APGG), Asp231, Asp251, and Asp267. Residue Lys296 is the Proton acceptor of the active site.

This sequence belongs to the class I-like SAM-binding methyltransferase superfamily. RNA methyltransferase RlmE family. RlmM subfamily. In terms of assembly, monomer.

The protein resides in the cytoplasm. The enzyme catalyses cytidine(2498) in 23S rRNA + S-adenosyl-L-methionine = 2'-O-methylcytidine(2498) in 23S rRNA + S-adenosyl-L-homocysteine + H(+). Catalyzes the 2'-O-methylation at nucleotide C2498 in 23S rRNA. This is Ribosomal RNA large subunit methyltransferase M from Laribacter hongkongensis (strain HLHK9).